The following is a 331-amino-acid chain: Ferredoxin--NADP reductase (331 aa).

Residues glutamate 34, glutamine 42, tyrosine 47, valine 87, phenylalanine 120, aspartate 285, and threonine 325 each contribute to the FAD site.

This sequence belongs to the ferredoxin--NADP reductase type 2 family. In terms of assembly, homodimer. FAD serves as cofactor.

The enzyme catalyses 2 reduced [2Fe-2S]-[ferredoxin] + NADP(+) + H(+) = 2 oxidized [2Fe-2S]-[ferredoxin] + NADPH. This chain is Ferredoxin--NADP reductase, found in Levilactobacillus brevis (strain ATCC 367 / BCRC 12310 / CIP 105137 / JCM 1170 / LMG 11437 / NCIMB 947 / NCTC 947) (Lactobacillus brevis).